A 225-amino-acid polypeptide reads, in one-letter code: Methylthioribulose-1-phosphate dehydratase (225 aa).

Zn(2+)-binding residues include His-106 and His-108.

Belongs to the aldolase class II family. MtnB subfamily. It depends on Zn(2+) as a cofactor.

The enzyme catalyses 5-(methylsulfanyl)-D-ribulose 1-phosphate = 5-methylsulfanyl-2,3-dioxopentyl phosphate + H2O. Its pathway is amino-acid biosynthesis; L-methionine biosynthesis via salvage pathway; L-methionine from S-methyl-5-thio-alpha-D-ribose 1-phosphate: step 2/6. Catalyzes the dehydration of methylthioribulose-1-phosphate (MTRu-1-P) into 2,3-diketo-5-methylthiopentyl-1-phosphate (DK-MTP-1-P). This Xanthomonas oryzae pv. oryzae (strain MAFF 311018) protein is Methylthioribulose-1-phosphate dehydratase.